The sequence spans 1053 residues: DIS3-like exonuclease 1 (1053 aa).

A CSD1 domain is found at 236 to 310 (AGIKSGRYIQ…KSEWKGRTAA (75 aa)). Positions 306 to 332 (GRTAALGENDSDDKASGESPSEPMPTG) are disordered. Residues 365–431 (ILVTPWDYRI…GEIATILVEN (67 aa)) form the CSD2 domain. One can recognise an RNB domain in the interval 465 to 816 (RKDLRTTHLV…VHRLLMAAIS (352 aa)). The residue at position 989 (Ser-989) is a Phosphoserine.

It belongs to the RNR ribonuclease family. Component of the RNA exosome complex. The catalytically inactive RNA exosome core (Exo-9) complex is believed to associate with catalytic subunits EXOSC10, and DIS3 or DIS3L in cytoplasmic- and nuclear-specific RNA exosome complex forms. Requires Mg(2+) as cofactor.

The protein localises to the cytoplasm. It carries out the reaction Exonucleolytic cleavage in the 3'- to 5'-direction to yield nucleoside 5'-phosphates.. Functionally, catalytic component of the RNA exosome complex which has 3'-&gt;5' exoribonuclease activity and participates in a multitude of cellular RNA processing and degradation events. In the cytoplasm, the RNA exosome complex is involved in general mRNA turnover and specifically degrades inherently unstable mRNAs containing AU-rich elements (AREs) within their 3' untranslated regions, and in RNA surveillance pathways, preventing translation of aberrant mRNAs. It seems to be involved in degradation of histone mRNA. This Mus musculus (Mouse) protein is DIS3-like exonuclease 1 (Dis3l).